A 258-amino-acid chain; its full sequence is MAKRIDVSGLTAYYGSHKAIEDISMTVEPRSVTAFIGPSGCGKSTFLRTLNRMHEVTPGGRVEGKVLLDDEDLYGQGIDPVSVRREVGMVFQRPNPFPTMSIFDNVAAGLRLNGSYKKSELSEIVEKSLKGANLWNEVKDRLNKPGSGLSGGQQQRLCIARAIAVEPNVLLMDEPCSALDPISTLAIEDLIGELKERFTIVIVTHNMQQAARVSDRTAFFNLAAVGQPGRLIEVDETERIFSNPSVQATEDYISGRFG.

One can recognise an ABC transporter domain in the interval 5–247; the sequence is IDVSGLTAYY…ERIFSNPSVQ (243 aa). 37-44 contributes to the ATP binding site; that stretch reads GPSGCGKS.

It belongs to the ABC transporter superfamily. Phosphate importer (TC 3.A.1.7) family. The complex is composed of two ATP-binding proteins (PstB), two transmembrane proteins (PstC and PstA) and a solute-binding protein (PstS).

The protein localises to the cell membrane. The enzyme catalyses phosphate(out) + ATP + H2O = ADP + 2 phosphate(in) + H(+). Its function is as follows. Part of the ABC transporter complex PstSACB involved in phosphate import. Responsible for energy coupling to the transport system. This is Phosphate import ATP-binding protein PstB from Streptomyces avermitilis (strain ATCC 31267 / DSM 46492 / JCM 5070 / NBRC 14893 / NCIMB 12804 / NRRL 8165 / MA-4680).